A 209-amino-acid chain; its full sequence is Ancillary SecYEG translocon subunit (209 aa).

Residues 1-23 (MAAHLEEQQELDNFKYFWKTTGK) lie on the Cytoplasmic side of the membrane. A helical membrane pass occupies residues 24–42 (WLFALLILAALGYLGYTVY). Topologically, residues 43–209 (QNRAASQNQE…LLQMKLDSLK (167 aa)) are periplasmic. The stretch at 161 to 194 (PLLMETKGDVYAAQEKSQEALKNYGQALEKMPQD) is one TPR repeat.

The protein belongs to the YfgM family. Interacts with the SecYEG translocon. Forms a complex with PpiD.

Its subcellular location is the cell inner membrane. May mediate protein transfer from the SecYEG translocon to the periplasmic chaperone network via its periplasmic C-terminal region. This chain is Ancillary SecYEG translocon subunit, found in Neisseria gonorrhoeae (strain ATCC 700825 / FA 1090).